The sequence spans 379 residues: MASRNIWCVRRNFLFDLRDWMLQYSAEVFLKSISFRPFSAECDSKDKESLEEEREDLLSNLVTMGVDIDMARRRQPGVFNKAVTNEQELKLFLLSKGASDKVIGSIISRYPRAITRTPESLSKRWDLWRKIMASDLEIVNILERSPESFFRSNNNLNLENNIKFLCSVGLTHKCLCRLLTNAPRTFSNSLNLNKQMVEFLQETGMSLGHNDPRDFVRKIISKNPSILIQSTKRVKTNIEFLQSTFNLNKRDLLLLICGPGARILDLSNDCTKKNYTNIRERLLSLGCSEEEVQRFVLSYLNMVFLSEKKFNDKIDCLIEEKISASQIIENPRILDSSINTLKTRIRELSHAGYDLSTSSIALLSWSQRRYEAKLKRLCG.

The transit peptide at 1 to 37 directs the protein to the mitochondrion; the sequence is MASRNIWCVRRNFLFDLRDWMLQYSAEVFLKSISFRP. Interaction with DNA regions lie at residues 151-152, 229-233, 306-313, 337-340, and 366-373; these read RS, QSTKR, SEKKFNDK, SINT, and SQRRYEAK.

Belongs to the mTERF family. Monomer. In terms of processing, phosphoprotein with mostly four phosphate groups. While the DNA-binding activity is unaffected by the phosphorylation state, only the phosphorylated form of the protein is active for termination activity. Functioning seems to be regulated by phosphorylation. Predominantly expressed in heart and liver, with extremely low levels in other tissues. Expressed strongly in the heart and at lower levels in brain, liver and kidney.

The protein localises to the mitochondrion. In terms of biological role, transcription termination factor. Binds to a 28 bp region within the tRNA(Leu(uur)) gene at a position immediately adjacent to and downstream of the 16S rRNA gene; this region comprises a tridecamer sequence critical for directing accurate termination. Binds DNA along the major grove and promotes DNA bending and partial unwinding. Promotes base flipping. Transcription termination activity appears to be polarized with highest specificity for transcripts initiated on the light strand. This chain is Transcription termination factor 1a, mitochondrial (Mterf1a), found in Mus musculus (Mouse).